The following is an 889-amino-acid chain: Mixed-linked glucan synthase 2 (889 aa).

The segment at 34-53 (AGADGQNGRRSPVAKRVNDG) is disordered. Helical transmembrane passes span 93-113 (ILHPYRFLILLRLIAIVAFFA) and 123-143 (GVWLWTMSMVGDVWFGFSWVL). Asp213 is a catalytic residue. Positions 265 to 293 (ELMSDHRRVRREYEEFKVRIDSLSSTIRQ) form a coiled coil. Substrate contacts are provided by Asp411 and Asp413. Asp579 is an active-site residue. 6 helical membrane passes run 655-675 (TYPIVTVFIFFYNLFPVMWLI), 685-705 (FGEYLLYLVAVIAMIHVIGMF), 723-743 (FYMIGSTGVYPTAVLYMALKL), 777-797 (LLIPTIVIIVVNVAAVGVAVG), 811-831 (LAVLGMVFNVWILVLLYPFAL), and 842-862 (AVLFVAMAMAVAAVAAMYVAF).

This sequence belongs to the glycosyltransferase 2 family. Plant cellulose synthase-like F subfamily.

The protein localises to the golgi apparatus membrane. Catalyzes both beta-1,3 and beta-1,4 glycosidic linkage on beta-D-glucan. Essential for (1,3;1,4)-beta-D-glucans synthesis in grasses and cereals (Poaceae). The mixed-linked glucans (which are not present in walls of dicotyledons or most other monocotyledonous plants) are particularly important constituents of the walls of the starchy endosperm and aleurone cells of cereal grains such as oats, wheat, rice and barley. They can account for up to 70% by weight of the wall. This chain is Mixed-linked glucan synthase 2 (CSLF2), found in Oryza sativa subsp. japonica (Rice).